A 187-amino-acid chain; its full sequence is Ribosome-recycling factor (187 aa).

Belongs to the RRF family.

It localises to the cytoplasm. Responsible for the release of ribosomes from messenger RNA at the termination of protein biosynthesis. May increase the efficiency of translation by recycling ribosomes from one round of translation to another. This Parvibaculum lavamentivorans (strain DS-1 / DSM 13023 / NCIMB 13966) protein is Ribosome-recycling factor.